Consider the following 1001-residue polypeptide: Copper-transporting ATPase RAN1 (1001 aa).

The segment at 1–21 is disordered; sequence MAPSRRDLQLTPVTGGSSSQI. Residues 1-298 lie on the Cytoplasmic side of the membrane; sequence MAPSRRDLQL…TGEASNMFRR (298 aa). Positions 11–21 are enriched in polar residues; the sequence is TPVTGGSSSQI. HMA domains are found at residues 56–122 and 133–199; these read RKIQ…FEAE and LVGQ…FEGS. 4 residues coordinate Cu(+): Cys67, Cys70, Cys144, and Cys147. Residues 207–273 form the HMA 3; degenerate domain; the sequence is DKLVLRVDGI…GIEEDGFGKF (67 aa). A helical transmembrane segment spans residues 299-320; it reads FISSLVLSIPLFFIQVICPHIA. Over 321–338 the chain is Extracellular; it reads LFDALLVWRCGPFMMGDW. Residues 339 to 358 form a helical membrane-spanning segment; it reads LKWALVSVIQFVIGKRFYVA. Over 359 to 365 the chain is Cytoplasmic; that stretch reads AWRALRN. The chain crosses the membrane as a helical span at residues 366–386; the sequence is GSTNMDVLVALGTSASYFYSV. Topologically, residues 387-403 are extracellular; it reads GALLYGAVTGFWSPTYF. A helical membrane pass occupies residues 404 to 424; sequence DASAMLITFVLLGKYLESLAK. Topologically, residues 425 to 558 are cytoplasmic; it reads GKTSDAMKKL…KAPIQKFADY (134 aa). A helical membrane pass occupies residues 559 to 581; sequence VASIFVPVVITLALFTLVGWSIG. The Extracellular segment spans residues 582 to 602; the sequence is GAVGAYPDEWLPENGTHFVFS. The helical transmembrane segment at 603-620 threads the bilayer; the sequence is LMFSISVVVIACPCALGL. At 621 to 931 the chain is on the cytoplasmic side; the sequence is ATPTAVMVAT…DLSRKTLTRI (311 aa). Asp658 (4-aspartylphosphate intermediate) is an active-site residue. Mg(2+) is bound by residues Asp877 and Asp881. A helical transmembrane segment spans residues 932–951; it reads RLNYVFAMAYNVVSIPIAAG. The Extracellular segment spans residues 952-963; sequence VFFPVLRVQLPP. A helical membrane pass occupies residues 964–982; the sequence is WAAGACMALSSVSVVCSSL. Residues 983–1001 lie on the Cytoplasmic side of the membrane; sequence LLRRYKKPRLTTVLKITTE.

It belongs to the cation transport ATPase (P-type) (TC 3.A.3) family. Type IB subfamily.

It localises to the membrane. The catalysed reaction is Cu(+)(in) + ATP + H2O = Cu(+)(out) + ADP + phosphate + H(+). Involved in copper import into the cell. Essential for ethylene signaling, which requires copper. Acts by delivering copper to create functional hormone receptors. This chain is Copper-transporting ATPase RAN1 (RAN1), found in Arabidopsis thaliana (Mouse-ear cress).